We begin with the raw amino-acid sequence, 430 residues long: Aspartate aminotransferase, mitochondrial (430 aa).

The N-terminal 29 residues, 1–29, are a transit peptide targeting the mitochondrion; the sequence is MALLHSGRVLSGVASAFHPGLAAAASARA. Phosphothreonine is present on Thr48. Residue Lys59 is modified to N6-acetyllysine. A substrate-binding site is contributed by Gly65. The residue at position 73 (Lys73) is an N6-acetyllysine; alternate. Lys73 is subject to N6-succinyllysine; alternate. N6-acetyllysine is present on Lys82. Lys90 carries the N6-acetyllysine; alternate modification. At Lys90 the chain carries N6-succinyllysine; alternate. Tyr96 carries the 3'-nitrotyrosine; alternate modification. A Phosphotyrosine; alternate modification is found at Tyr96. Lys107, Lys122, and Lys159 each carry N6-acetyllysine; alternate. Residues Lys107, Lys122, and Lys159 each carry the N6-succinyllysine; alternate modification. Trp162 is a substrate binding site. At Lys185 the chain carries N6-acetyllysine; alternate. The residue at position 185 (Lys185) is an N6-succinyllysine; alternate. Residue Asn215 participates in substrate binding. N6-succinyllysine is present on Lys227. Lys234 bears the N6-acetyllysine mark. An N6-acetyllysine; alternate mark is found at Lys279 and Lys296. N6-(pyridoxal phosphate)lysine; alternate is present on Lys279. Lys296 is subject to N6-succinyllysine; alternate. The residue at position 302 (Lys302) is an N6-acetyllysine. Residue Lys309 is modified to N6-acetyllysine; alternate. Residue Lys309 is modified to N6-succinyllysine; alternate. Asymmetric dimethylarginine is present on Arg313. Position 345 is an N6-acetyllysine (Lys345). Lys363 is subject to N6-acetyllysine; alternate. Lys363 is subject to N6-succinyllysine; alternate. An N6-acetyllysine mark is found at Lys364 and Lys387. Lys396 and Lys404 each carry N6-acetyllysine; alternate. 2 positions are modified to N6-succinyllysine; alternate: Lys396 and Lys404. A substrate-binding site is contributed by Arg407.

It belongs to the class-I pyridoxal-phosphate-dependent aminotransferase family. Homodimer. Pyridoxal 5'-phosphate is required as a cofactor.

The protein resides in the mitochondrion matrix. The protein localises to the cell membrane. It carries out the reaction L-aspartate + 2-oxoglutarate = oxaloacetate + L-glutamate. The catalysed reaction is L-kynurenine + 2-oxoglutarate = kynurenate + L-glutamate + H2O. In terms of biological role, catalyzes the irreversible transamination of the L-tryptophan metabolite L-kynurenine to form kynurenic acid (KA). As a member of the malate-aspartate shuttle, it has a key role in the intracellular NAD(H) redox balance. Is important for metabolite exchange between mitochondria and cytosol, and for amino acid metabolism. Facilitates cellular uptake of long-chain free fatty acids. The protein is Aspartate aminotransferase, mitochondrial (GOT2) of Sus scrofa (Pig).